The primary structure comprises 453 residues: GTPase Der (453 aa).

EngA-type G domains are found at residues 4–169 (PIVA…PPVT) and 177–352 (IKIA…EEHK). GTP contacts are provided by residues 10–17 (GRPNVGKS), 57–61 (DTGGL), 120–123 (NKCE), 183–190 (GRPNVGKS), 230–234 (DTAGI), and 295–298 (NKWD). The region spanning 353–438 (RRVSTSVINE…PIRLLWRSKK (86 aa)) is the KH-like domain.

The protein belongs to the TRAFAC class TrmE-Era-EngA-EngB-Septin-like GTPase superfamily. EngA (Der) GTPase family. As to quaternary structure, associates with the 50S ribosomal subunit.

Functionally, GTPase that plays an essential role in the late steps of ribosome biogenesis. The polypeptide is GTPase Der (Nostoc sp. (strain PCC 7120 / SAG 25.82 / UTEX 2576)).